Reading from the N-terminus, the 59-residue chain is Large ribosomal subunit protein bL32c (59 aa).

The tract at residues 36–59 (KSRSFSGVSEHPKPKGFSRQQTNK) is disordered.

It belongs to the bacterial ribosomal protein bL32 family.

Its subcellular location is the plastid. The protein resides in the chloroplast. This chain is Large ribosomal subunit protein bL32c, found in Oryza nivara (Indian wild rice).